Here is a 145-residue protein sequence, read N- to C-terminus: Antiholin-like protein LrgA (145 aa).

4 helical membrane-spanning segments follow: residues 13 to 30, 40 to 62, 69 to 91, and 95 to 117; these read FFHQ…SKII, GSVI…LGEV, LTNN…LGVI, and PFLI…GYVT.

Belongs to the CidA/LrgA family. LrgA subfamily.

It is found in the cell membrane. Inhibits the expression or activity of extracellular murein hydrolases by interacting, possibly with LrgB, with the holin-like proteins CidA and/or CidB. The LrgAB and CidAB proteins may affect the proton motive force of the membrane. May be involved in programmed cell death (PCD), possibly triggering PCD in response to antibiotics and environmental stresses. This is Antiholin-like protein LrgA from Staphylococcus aureus (strain MW2).